The primary structure comprises 141 residues: Hemoglobin subunit alpha (141 aa).

The Globin domain occupies 1-141; that stretch reads VLSAADKSNV…VSTVLTSKYR (141 aa). Serine 3 bears the Phosphoserine mark. N6-succinyllysine is present on residues lysine 7 and lysine 11. N6-acetyllysine; alternate is present on lysine 16. An N6-succinyllysine; alternate modification is found at lysine 16. Tyrosine 24 carries the post-translational modification Phosphotyrosine. Residue serine 35 is modified to Phosphoserine. Lysine 40 carries the N6-succinyllysine modification. Serine 49 is modified (phosphoserine). O2 is bound at residue histidine 58. Histidine 87 serves as a coordination point for heme b. Position 102 is a phosphoserine (serine 102). Threonine 108 carries the phosphothreonine modification. A Phosphoserine modification is found at serine 124. 2 positions are modified to phosphothreonine: threonine 134 and threonine 137. Residue serine 138 is modified to Phosphoserine.

This sequence belongs to the globin family. In terms of assembly, heterotetramer of two alpha chains and two beta chains. As to expression, red blood cells.

Functionally, involved in oxygen transport from the lung to the various peripheral tissues. In terms of biological role, hemopressin acts as an antagonist peptide of the cannabinoid receptor CNR1. Hemopressin-binding efficiently blocks cannabinoid receptor CNR1 and subsequent signaling. The chain is Hemoglobin subunit alpha (HBA) from Rangifer tarandus (Reindeer).